A 393-amino-acid chain; its full sequence is tRNA(Met) cytidine acetate ligase (393 aa).

Positions 81, 142, and 167 each coordinate ATP.

The protein belongs to the TmcAL family.

The protein localises to the cytoplasm. The enzyme catalyses cytidine(34) in elongator tRNA(Met) + acetate + ATP = N(4)-acetylcytidine(34) in elongator tRNA(Met) + AMP + diphosphate. Its function is as follows. Catalyzes the formation of N(4)-acetylcytidine (ac(4)C) at the wobble position of elongator tRNA(Met), using acetate and ATP as substrates. First activates an acetate ion to form acetyladenylate (Ac-AMP) and then transfers the acetyl group to tRNA to form ac(4)C34. In Bacillus cereus (strain ZK / E33L), this protein is tRNA(Met) cytidine acetate ligase.